A 142-amino-acid polypeptide reads, in one-letter code: Large ribosomal subunit protein uL13 (142 aa).

The protein belongs to the universal ribosomal protein uL13 family. As to quaternary structure, part of the 50S ribosomal subunit.

Functionally, this protein is one of the early assembly proteins of the 50S ribosomal subunit, although it is not seen to bind rRNA by itself. It is important during the early stages of 50S assembly. The sequence is that of Large ribosomal subunit protein uL13 from Actinobacillus pleuropneumoniae serotype 5b (strain L20).